The following is a 488-amino-acid chain: Regulatory protein ViaA (488 aa).

It belongs to the ViaA family. As to quaternary structure, homodimer. Interacts with RavA.

It localises to the cytoplasm. Component of the RavA-ViaA chaperone complex, which may act on the membrane to optimize the function of some of the respiratory chains. ViaA stimulates the ATPase activity of RavA. The polypeptide is Regulatory protein ViaA (Yersinia enterocolitica serotype O:8 / biotype 1B (strain NCTC 13174 / 8081)).